Reading from the N-terminus, the 253-residue chain is Tetraspanin-3 (253 aa).

At 1–11 the chain is on the cytoplasmic side; it reads MGQCGITSSKT. A helical membrane pass occupies residues 12 to 32; it reads VLVFLNLIFWGAAGILCYVGA. The Extracellular segment spans residues 33–50; it reads YVFITYDDYDHFFEDVYT. A helical transmembrane segment spans residues 51–71; the sequence is LIPAVVIIAVGALLFIIGLIG. At 72 to 85 the chain is on the cytoplasmic side; it reads CCATIRESRCGLAT. The helical transmembrane segment at 86–106 threads the bilayer; it reads FVIILLLVFVTEVVVVVLGYV. Topologically, residues 107-212 are extracellular; sequence YRAKVENEVD…KKLQEIMMHV (106 aa). N-linked (GlcNAc...) asparagine glycans are attached at residues N127, N152, N167, and N183. Residues 213–233 traverse the membrane as a helical segment; sequence IWAALAFAAIQLLGMLCACIV. Residues 234–253 are Cytoplasmic-facing; the sequence is LCRRSRDPAYELLITGGTYA.

Belongs to the tetraspanin (TM4SF) family. As to quaternary structure, interacts with claudin-11/CLDN11 and integrins.

The protein resides in the membrane. In terms of biological role, regulates the proliferation and migration of oligodendrocytes, a process essential for normal myelination and repair. This is Tetraspanin-3 (TSPAN3) from Homo sapiens (Human).